We begin with the raw amino-acid sequence, 282 residues long: Elongation factor Ts (282 aa).

Residues 80 to 83 (TDFV) are involved in Mg(2+) ion dislocation from EF-Tu.

Belongs to the EF-Ts family.

It is found in the cytoplasm. In terms of biological role, associates with the EF-Tu.GDP complex and induces the exchange of GDP to GTP. It remains bound to the aminoacyl-tRNA.EF-Tu.GTP complex up to the GTP hydrolysis stage on the ribosome. The chain is Elongation factor Ts from Protochlamydia amoebophila (strain UWE25).